The chain runs to 279 residues: Hydroxyethylthiazole kinase (279 aa).

Residue Met-58 participates in substrate binding. The ATP site is built by Lys-134 and Thr-180. Position 207 (Gly-207) interacts with substrate.

Belongs to the Thz kinase family. Mg(2+) is required as a cofactor.

The catalysed reaction is 5-(2-hydroxyethyl)-4-methylthiazole + ATP = 4-methyl-5-(2-phosphooxyethyl)-thiazole + ADP + H(+). Its pathway is cofactor biosynthesis; thiamine diphosphate biosynthesis; 4-methyl-5-(2-phosphoethyl)-thiazole from 5-(2-hydroxyethyl)-4-methylthiazole: step 1/1. In terms of biological role, catalyzes the phosphorylation of the hydroxyl group of 4-methyl-5-beta-hydroxyethylthiazole (THZ). This is Hydroxyethylthiazole kinase from Methanoculleus marisnigri (strain ATCC 35101 / DSM 1498 / JR1).